We begin with the raw amino-acid sequence, 1241 residues long: Anion exchange protein 2 (1241 aa).

Positions 1-240 are disordered; sequence MSSAPRRPAK…RSYNLQERRR (240 aa). Over 1 to 707 the chain is Cytoplasmic; that stretch reads MSSAPRRPAK…SDFRDALDPQ (707 aa). 2 stretches are compositionally biased toward basic and acidic residues: residues 37 to 49 and 58 to 75; these read ELHRTLGVERFEE and GGEEPGRSYGEEDFEYHR. Basic residues-rich tracts occupy residues 76–85 and 94–110; these read QSSHHIHHPL and RRRKTPQGPGRKPRRRP. Phosphoserine is present on residues Ser-113, Ser-132, Ser-144, Ser-170, Ser-172, and Ser-173. Acidic residues predominate over residues 120–133; the sequence is TIEEGEEDEDEASE. The span at 141–155 shows a compositional bias: low complexity; that stretch reads TQPSPVSTPSSVQFF. Phosphothreonine is present on Thr-183. A compositionally biased stretch (low complexity) spans 189–209; it reads GAQAGTQVEEAEAEAVAVASG. A compositionally biased stretch (gly residues) spans 210–219; sequence TAGGDDGGAS. Ser-243 carries the phosphoserine modification. Position 257 is a phosphothreonine (Thr-257). Position 274 is an N6-methyllysine (Lys-274). The segment at 288–320 is disordered; sequence LVRKNAKGSTQSGREGREPGPTPRARPRAPHKP. Position 443 is a phosphoserine (Ser-443). The interval 449–471 is disordered; sequence SLLGHHHGQGAESDPHVTEPLMG. Helical transmembrane passes span 708 to 731, 737 to 774, 784 to 816, and 826 to 847; these read CLAAVIFIYFAALSPAITFGGLLG, LIGVSELIMSTALQGVVFCLLGAQPLLVIGFSGPLLVF, SNHLEYLVGRVWIGFWLVFLALLMVALEGSFLV, and IFAFLISLIFIYETFYKLVKIF. Residues 708 to 1241 form a membrane (anion exchange) region; it reads CLAAVIFIYF…DEYNEMPMPV (534 aa). The Extracellular portion of the chain corresponds to 848-900; it reads QEHPLHGCSASNSSEVDGGENMTWAGARPTLGPGNRSLAGQSGQGKPRGQPNT. Asn-859, Asn-868, and Asn-882 each carry an N-linked (GlcNAc...) asparagine glycan. Residues 901–918 traverse the membrane as a helical segment; the sequence is ALLSLVLMAGTFFIAFFL. Residues 919–933 are Cytoplasmic-facing; that stretch reads RKFKNSRFFPGRIRR. Transmembrane regions (helical) follow at residues 934–954, 988–1010, 1036–1059, 1091–1136, and 1163–1199; these read VIGDFGVPIAILIMVLVDYSI, PFPVWMMVASLLPAILVFILIFM, LLLIVAMGGICALFGLPWLAAATV, VTGL…IQFY, and MHLFTALQLLCLALLWAVMSTAASLAFPFILILTVPL. A lipid anchor (S-palmitoyl cysteine) is attached at Cys-1173.

Belongs to the anion exchanger (TC 2.A.31) family. Expressed in the liver, stomach, kidney, prostate, thyroid and rectum. In terms of tissue distribution, expressed in the liver and kidney.

Its subcellular location is the apical cell membrane. The protein resides in the basolateral cell membrane. It carries out the reaction hydrogencarbonate(in) + chloride(out) = hydrogencarbonate(out) + chloride(in). Sodium-independent anion exchanger which mediates the electroneutral exchange of chloride for bicarbonate ions across the cell membrane. Plays an important role in osteoclast differentiation and function. Regulates bone resorption and calpain-dependent actin cytoskeleton organization in osteoclasts via anion exchange-dependent control of pH. Essential for intracellular pH regulation in CD8(+) T-cells upon CD3 stimulation, modulating CD8(+) T-cell responses. This Homo sapiens (Human) protein is Anion exchange protein 2 (SLC4A2).